The chain runs to 360 residues: MSIICAKVAWLPLTLGTAMGFLITFYLARTLLERNSQPPLALRSWNNMELLPEVGMSHFHLPEDNSVSEELSKKVRVLCWIMTGPTNLKTKAIHVKNSWTRHCNVALFMSSITDEDFPAIGLGTGEGRDKLYWKTIRAFHYAHKYYLNETEWFFKADDDTYVIMDNLRWMLSNYTADQPIYFGKRFKPYIKQGYMSGGAGYVLSREALIRFVEGFRTGVCKHTTSTEDVAIGNCMQLMGVIAGDSRDTEKRETFHPFPPEHHLTMKFSESKSFWYWSYCVYPIVEGPQCCSDLAISFHYISPEDMYTLEYFIYHLRAHGYQYRYQPPLSDNADNLPVYIENETVKPNRTISDFLEPPMES.

Residues 1-7 lie on the Cytoplasmic side of the membrane; it reads MSIICAK. Residues 8–28 traverse the membrane as a helical; Signal-anchor for type II membrane protein segment; sequence VAWLPLTLGTAMGFLITFYLA. The Lumenal segment spans residues 29–360; it reads RTLLERNSQP…SDFLEPPMES (332 aa). Cys79 and Cys103 form a disulfide bridge. UDP contacts are provided by Met82, Glu126, Gly127, Arg128, and Lys134. Asn148 carries an N-linked (GlcNAc...) asparagine glycan. Asp157 is a binding site for UDP. Asp157 and Asp159 together coordinate Mn(2+). Residue Asn173 is glycosylated (N-linked (GlcNAc...) asparagine). Cys220 and Cys234 are oxidised to a cystine. An a glycoprotein-binding site is contributed by Trp274. Cys289 and Cys290 are joined by a disulfide. UDP is bound by residues His298 and Tyr299. His298 serves as a coordination point for Mn(2+). 2 N-linked (GlcNAc...) asparagine glycosylation sites follow: Asn341 and Asn347.

This sequence belongs to the glycosyltransferase 31 family. Beta3-Gal-T subfamily. Homodimer; disulfide-linked. Mn(2+) is required as a cofactor.

The protein localises to the membrane. It catalyses the reaction an N-acetyl-alpha-D-galactosaminyl derivative + UDP-alpha-D-galactose = a beta-D-galactosyl-(1-&gt;3)-N-acetyl-alpha-D-galactosaminyl derivative + UDP + H(+). It functions in the pathway protein modification; protein glycosylation. Its function is as follows. Glycosyltransferase that generates the core 1 O-glycan Gal-beta1-3GalNAc-alpha1-Ser/Thr (T antigen), which is a precursor for many extended O-glycans in glycoproteins. This Xenopus laevis (African clawed frog) protein is Glycoprotein-N-acetylgalactosamine 3-beta-galactosyltransferase 1 (c1galt1).